The chain runs to 207 residues: Thiamine-phosphate synthase (207 aa).

4-amino-2-methyl-5-(diphosphooxymethyl)pyrimidine contacts are provided by residues 37-41 (QYRDK) and Asn-69. Residues Asp-70 and Asp-89 each coordinate Mg(2+). Residue Ser-108 coordinates 4-amino-2-methyl-5-(diphosphooxymethyl)pyrimidine. 135–137 (SRT) provides a ligand contact to 2-[(2R,5Z)-2-carboxy-4-methylthiazol-5(2H)-ylidene]ethyl phosphate. Residue Lys-138 coordinates 4-amino-2-methyl-5-(diphosphooxymethyl)pyrimidine. A 2-[(2R,5Z)-2-carboxy-4-methylthiazol-5(2H)-ylidene]ethyl phosphate-binding site is contributed by Gly-164.

The protein belongs to the thiamine-phosphate synthase family. Mg(2+) is required as a cofactor.

It catalyses the reaction 2-[(2R,5Z)-2-carboxy-4-methylthiazol-5(2H)-ylidene]ethyl phosphate + 4-amino-2-methyl-5-(diphosphooxymethyl)pyrimidine + 2 H(+) = thiamine phosphate + CO2 + diphosphate. It carries out the reaction 2-(2-carboxy-4-methylthiazol-5-yl)ethyl phosphate + 4-amino-2-methyl-5-(diphosphooxymethyl)pyrimidine + 2 H(+) = thiamine phosphate + CO2 + diphosphate. The enzyme catalyses 4-methyl-5-(2-phosphooxyethyl)-thiazole + 4-amino-2-methyl-5-(diphosphooxymethyl)pyrimidine + H(+) = thiamine phosphate + diphosphate. Its pathway is cofactor biosynthesis; thiamine diphosphate biosynthesis; thiamine phosphate from 4-amino-2-methyl-5-diphosphomethylpyrimidine and 4-methyl-5-(2-phosphoethyl)-thiazole: step 1/1. In terms of biological role, condenses 4-methyl-5-(beta-hydroxyethyl)thiazole monophosphate (THZ-P) and 2-methyl-4-amino-5-hydroxymethyl pyrimidine pyrophosphate (HMP-PP) to form thiamine monophosphate (TMP). This Chromobacterium violaceum (strain ATCC 12472 / DSM 30191 / JCM 1249 / CCUG 213 / NBRC 12614 / NCIMB 9131 / NCTC 9757 / MK) protein is Thiamine-phosphate synthase.